The sequence spans 278 residues: Bifunctional protein FolD (278 aa).

NADP(+) is bound by residues 165 to 167 (GRS) and Ser-190.

Belongs to the tetrahydrofolate dehydrogenase/cyclohydrolase family. Homodimer.

It carries out the reaction (6R)-5,10-methylene-5,6,7,8-tetrahydrofolate + NADP(+) = (6R)-5,10-methenyltetrahydrofolate + NADPH. It catalyses the reaction (6R)-5,10-methenyltetrahydrofolate + H2O = (6R)-10-formyltetrahydrofolate + H(+). The protein operates within one-carbon metabolism; tetrahydrofolate interconversion. Functionally, catalyzes the oxidation of 5,10-methylenetetrahydrofolate to 5,10-methenyltetrahydrofolate and then the hydrolysis of 5,10-methenyltetrahydrofolate to 10-formyltetrahydrofolate. In Clostridium tetani (strain Massachusetts / E88), this protein is Bifunctional protein FolD.